The primary structure comprises 485 residues: Cytoplasmic tRNA 2-thiolation protein 2 (485 aa).

The protein belongs to the CTU2/NCS2 family.

Its subcellular location is the cytoplasm. The protein operates within tRNA modification; 5-methoxycarbonylmethyl-2-thiouridine-tRNA biosynthesis. Functionally, plays a central role in 2-thiolation of mcm(5)S(2)U at tRNA wobble positions of tRNA(Lys), tRNA(Glu) and tRNA(Gln). May act by forming a heterodimer with NCS6 that ligates sulfur from thiocarboxylated URM1 onto the uridine of tRNAs at wobble position. Prior mcm(5) tRNA modification by the elongator complex is required for 2-thiolation. May also be involved in protein urmylation. This Vanderwaltozyma polyspora (strain ATCC 22028 / DSM 70294 / BCRC 21397 / CBS 2163 / NBRC 10782 / NRRL Y-8283 / UCD 57-17) (Kluyveromyces polysporus) protein is Cytoplasmic tRNA 2-thiolation protein 2.